We begin with the raw amino-acid sequence, 3411 residues long: Genome polyprotein (3411 aa).

At 1–104 the chain is on the cytoplasmic side; sequence MSGRKAQGKT…LSSRKRRSHD (104 aa). Residues 38–72 are hydrophobic; homodimerization of capsid protein C; sequence PGPSRGVQGFIFFFLFNILTGKKITAHLKRLWKML. A propeptide spans 102-121 (ER anchor for the capsid protein C, removed in mature form by serine protease NS3); it reads SHDVLTVQFLILGMLLMTGG. Residues 105 to 125 traverse the membrane as a helical segment; the sequence is VLTVQFLILGMLLMTGGVTLV. At 126–244 the chain is on the extracellular side; the sequence is RKNRWLLLNV…GERQLQKIER (119 aa). N-linked (GlcNAc...) asparagine; by host glycans are attached at residues Asn134 and Asn150. Residues 245 to 265 form a helical membrane-spanning segment; the sequence is WFVRNPFFAVTALTIAYLVGS. Over 266-270 the chain is Cytoplasmic; it reads NMTQR. Residues 271–285 form a helical membrane-spanning segment; the sequence is VVIALLVLAVGPAYS. Residues 286–730 are Extracellular-facing; that stretch reads AHCIGITDRD…TVFGSAFQGL (445 aa). 8 disulfides stabilise this stretch: Cys288–Cys315, Cys345–Cys401, Cys345–Cys406, Cys359–Cys390, Cys377–Cys401, Cys377–Cys406, Cys467–Cys568, and Cys585–Cys615. Positions 383-396 are fusion peptide; it reads DRGWGNGCGLFGKG. Residues 731–751 traverse the membrane as a helical segment; the sequence is FGGLNWITKVIMGAVLIWVGI. At 752–757 the chain is on the extracellular side; the sequence is NTRNMT. A helical membrane pass occupies residues 758–778; that stretch reads MSMSMILVGVIMMFLSLGVGA. Topologically, residues 779–1132 are extracellular; it reads DQGCAINFGK…LVRSWVTAGE (354 aa). 6 cysteine pairs are disulfide-bonded: Cys782–Cys793, Cys833–Cys921, Cys957–Cys1002, Cys1058–Cys1107, Cys1069–Cys1091, and Cys1090–Cys1094. 2 N-linked (GlcNAc...) asparagine; by host glycosylation sites follow: Asn908 and Asn986. A helical transmembrane segment spans residues 1133–1153; it reads IHAVPFGLVSMMIAMEVVLRK. Topologically, residues 1154-1201 are cytoplasmic; it reads RQGPKQMLVGGVVLLGAMLVGQVTLLDLLKLTVAVGLHFHEMNNGGDA. Residues 1202–1222 traverse the membrane as a helical segment; the sequence is MYMALIAAFSIRPGLLIGFGL. Topologically, residues 1223-1287 are lumenal; it reads RTLWSPRERL…ILPLMALLTP (65 aa). A helical membrane pass occupies residues 1288 to 1308; the sequence is VTMAEVRLAAMFFCAVVIIGV. At 1309-1355 the chain is on the cytoplasmic side; sequence LHQNFKDTSMQKTIPLVALTLTSYLGLTQPFLGLCAFLATRIFGRRS. The helical transmembrane segment at 1356–1376 threads the bilayer; that stretch reads IPVNEALAAAGLVGVLAGLAF. The Lumenal segment spans residues 1377–1378; it reads QE. A helical membrane pass occupies residues 1379–1399; sequence MENFLGPIAVGGLLMMLVSVA. Topologically, residues 1400–1456 are cytoplasmic; sequence GRVDGLELKKLGEVSWEEEAEISGSSARYDVALSEQGEFKLLSEEKVPWDQVVMTSL. An interacts with and activates NS3 protease region spans residues 1407-1446; it reads LKKLGEVSWEEEAEISGSSARYDVALSEQGEFKLLSEEKV. The helical intramembrane region spans 1457 to 1477; it reads ALVGAALHPFALLLVLAGWLF. Topologically, residues 1478–2157 are cytoplasmic; sequence HVRGARRSGD…RNALSMMPEA (680 aa). One can recognise a Peptidase S7 domain in the interval 1485-1665; sequence SGDVLWDIPT…EVKEEGKEEL (181 aa). Residues His1537, Asp1561, and Ser1622 each act as charge relay system; for serine protease NS3 activity in the active site. One can recognise a Helicase ATP-binding domain in the interval 1669–1825; sequence PTMLKKGMTT…HSNGEIEDVQ (157 aa). The segment at 1673 to 1676 is important for RNA-binding; sequence KKGM. 1682–1689 lines the ATP pocket; sequence FHPGAGKT. Residues 1773 to 1776 carry the DEAH box motif; that stretch reads DEAH. The 178-residue stretch at 1820 to 1997 folds into the Helicase C-terminal domain; that stretch reads EIEDVQTDIP…VRGGMVAPLY (178 aa). N6-acetyllysine; by host is present on Lys1877. Residues 2158 to 2178 traverse the membrane as a helical segment; sequence MTIVMLFILAGLLTSGMVIFF. The Lumenal portion of the chain corresponds to 2179–2186; it reads MSPKGISR. The helical intramembrane region spans 2187–2207; that stretch reads MSMAMGTMAGCGYLMFLGGVK. The Lumenal portion of the chain corresponds to 2208–2209; sequence PT. A helical transmembrane segment spans residues 2210-2230; that stretch reads HISYVMLIFFVLMVVVIPEPG. Topologically, residues 2231–2241 are cytoplasmic; it reads QQRSIQDNQVA. The chain crosses the membrane as a helical span at residues 2242 to 2262; that stretch reads YLIIGILTLVSAVAANELGML. Residues 2263–2293 are Lumenal-facing; it reads EKTKEDLFGKKNLIPSSASPWSWPDLDLKPG. Residues 2294 to 2314 constitute an intramembrane region (helical); it reads AAWTVYVGIVTMLSPMLHHWI. Topologically, residues 2315 to 2360 are lumenal; sequence KVEYGNLSLSGIAQSASVLSFMDKGIPFMKMNISVIMLLVSGWNSI. Residues 2361–2381 traverse the membrane as a helical segment; that stretch reads TVMPLLCGIGCAMLHWSLILP. Topologically, residues 2382–2421 are cytoplasmic; that stretch reads GIKAQQSKLAQRRVFHGVAENPVVDGNPTVDIEEAPEMPA. The chain crosses the membrane as a helical span at residues 2422–2442; sequence LYEKKLALYLLLALSLASVAM. Residues 2443 to 2445 are Lumenal-facing; the sequence is CRT. A helical membrane pass occupies residues 2446–2466; sequence PFSLAEGIVLASAALGPLIEG. Topologically, residues 2467-3411 are cytoplasmic; the sequence is NTSLLWNGPM…DADLQLGELI (945 aa). The mRNA cap 0-1 NS5-type MT domain occupies 2507 to 2771; that stretch reads GSANGKTLGE…DVILPIGTRS (265 aa). Residue Ser2562 participates in S-adenosyl-L-methionine binding. At Ser2562 the chain carries Phosphoserine. The For 2'-O-MTase activity role is filled by Lys2567. Positions 2592, 2593, 2610, 2611, 2637, and 2638 each coordinate S-adenosyl-L-methionine. Residue Asp2652 is the For 2'-O-MTase activity of the active site. Ile2653 provides a ligand contact to S-adenosyl-L-methionine. Residues Lys2688 and Glu2724 each act as for 2'-O-MTase activity in the active site. Tyr2726 lines the S-adenosyl-L-methionine pocket. The short motif at 2878-2911 is the Nuclear localization signal element; it reads RKIMKVVNRWLFRHLAREKNPRLCTKEEFIAKVR. Residues Glu2945, His2949, Cys2954, and Cys2957 each contribute to the Zn(2+) site. In terms of domain architecture, RdRp catalytic spans 3035 to 3187; the sequence is GGFYADDTAG…RPIDDRFGLA (153 aa). Residues His3222, Cys3238, and Cys3357 each coordinate Zn(2+).

The protein in the N-terminal section; belongs to the class I-like SAM-binding methyltransferase superfamily. mRNA cap 0-1 NS5-type methyltransferase family. In terms of assembly, homodimer. Interacts (via N-terminus) with host EXOC1 (via C-terminus); this interaction results in EXOC1 degradation through the proteasome degradation pathway. Forms heterodimers with envelope protein E in the endoplasmic reticulum and Golgi. As to quaternary structure, homodimer; in the endoplasmic reticulum and Golgi. Interacts with protein prM. Interacts with non-structural protein 1. In terms of assembly, homodimer; Homohexamer when secreted. Interacts with envelope protein E. Interacts (via N-terminus) with serine protease NS3. As to quaternary structure, forms a heterodimer with serine protease NS3. May form homooligomers. In terms of assembly, forms a heterodimer with NS2B. Interacts with non-structural protein 2A (via N-terminus). Interacts with NS4B. Interacts with unphosphorylated RNA-directed RNA polymerase NS5; this interaction stimulates RNA-directed RNA polymerase NS5 guanylyltransferase activity. NS3 interacts with host PDCD6IP; this interaction contributes to virion release. Interacts with serine protease NS3. As to quaternary structure, homodimer. Interacts with host STAT2; this interaction prevents the establishment of cellular antiviral state. Interacts with serine protease NS3. Interacts with host TRIM23; this interaction leads to NS5 ubiquitination. In terms of processing, specific enzymatic cleavages in vivo yield mature proteins. The nascent capsid protein C contains a C-terminal hydrophobic domain that act as a signal sequence for translocation of prM into the lumen of the ER. Mature capsid protein C is cleaved at a site upstream of this hydrophobic domain by NS3. prM is cleaved in post-Golgi vesicles by a host furin, releasing the mature small envelope protein M, and peptide pr. Non-structural protein 2A-alpha, a C-terminally truncated form of non-structural protein 2A, results from partial cleavage by NS3. Specific enzymatic cleavages in vivo yield mature proteins peptide 2K acts as a signal sequence and is removed from the N-terminus of NS4B by the host signal peptidase in the ER lumen. Signal cleavage at the 2K-4B site requires a prior NS3 protease-mediated cleavage at the 4A-2K site. Cleaved in post-Golgi vesicles by a host furin, releasing the mature small envelope protein M, and peptide pr. This cleavage is incomplete as up to 30% of viral particles still carry uncleaved prM. Post-translationally, N-glycosylated. In terms of processing, N-glycosylated. The excreted form is glycosylated and this is required for efficient secretion of the protein from infected cells. Polyubiquitinated; ubiquitination is probably mediated by host TRIM23 and is prerequisite for NS5-STAT2 interaction. NS5 is not ISGylated or sumoylated. Post-translationally, acetylated by host KAT5. Acetylation modulates NS3 RNA-binding and unwinding activities and plays an important positive role for viral replication. In terms of processing, phosphorylated on serines residues. This phosphorylation may trigger NS5 nuclear localization.

The protein localises to the virion. It is found in the host nucleus. It localises to the host cytoplasm. The protein resides in the host perinuclear region. Its subcellular location is the secreted. The protein localises to the virion membrane. It is found in the host endoplasmic reticulum membrane. The enzyme catalyses Selective hydrolysis of -Xaa-Xaa-|-Yaa- bonds in which each of the Xaa can be either Arg or Lys and Yaa can be either Ser or Ala.. It catalyses the reaction RNA(n) + a ribonucleoside 5'-triphosphate = RNA(n+1) + diphosphate. The catalysed reaction is a ribonucleoside 5'-triphosphate + H2O = a ribonucleoside 5'-diphosphate + phosphate + H(+). It carries out the reaction ATP + H2O = ADP + phosphate + H(+). The enzyme catalyses a 5'-end (5'-triphosphoguanosine)-ribonucleoside in mRNA + S-adenosyl-L-methionine = a 5'-end (N(7)-methyl 5'-triphosphoguanosine)-ribonucleoside in mRNA + S-adenosyl-L-homocysteine. It catalyses the reaction a 5'-end (N(7)-methyl 5'-triphosphoguanosine)-ribonucleoside in mRNA + S-adenosyl-L-methionine = a 5'-end (N(7)-methyl 5'-triphosphoguanosine)-(2'-O-methyl-ribonucleoside) in mRNA + S-adenosyl-L-homocysteine + H(+). In terms of biological role, plays a role in virus budding by binding to the cell membrane and gathering the viral RNA into a nucleocapsid that forms the core of a mature virus particle. During virus entry, may induce genome penetration into the host cytoplasm after hemifusion induced by the surface proteins. Can migrate to the cell nucleus where it modulates host functions. Its function is as follows. Inhibits RNA silencing by interfering with host Dicer. Prevents premature fusion activity of envelope proteins in trans-Golgi by binding to envelope protein E at pH6.0. After virion release in extracellular space, gets dissociated from E dimers. Functionally, acts as a chaperone for envelope protein E during intracellular virion assembly by masking and inactivating envelope protein E fusion peptide. prM is the only viral peptide matured by host furin in the trans-Golgi network probably to avoid catastrophic activation of the viral fusion activity in acidic Golgi compartment prior to virion release. prM-E cleavage is inefficient, and many virions are only partially matured. These uncleaved prM would play a role in immune evasion. In terms of biological role, may play a role in virus budding. Exerts cytotoxic effects by activating a mitochondrial apoptotic pathway through M ectodomain. May display a viroporin activity. Its function is as follows. Binds to host cell surface receptor and mediates fusion between viral and cellular membranes. Envelope protein is synthesized in the endoplasmic reticulum in the form of heterodimer with protein prM. They play a role in virion budding in the ER, and the newly formed immature particle is covered with 60 spikes composed of heterodimer between precursor prM and envelope protein E. The virion is transported to the Golgi apparatus where the low pH causes dissociation of PrM-E heterodimers and formation of E homodimers. prM-E cleavage is inefficient, and many virions are only partially matured. These uncleaved prM would play a role in immune evasion. Involved in immune evasion, pathogenesis and viral replication. Once cleaved off the polyprotein, is targeted to three destinations: the viral replication cycle, the plasma membrane and the extracellular compartment. Essential for viral replication. Required for formation of the replication complex and recruitment of other non-structural proteins to the ER-derived membrane structures. Excreted as a hexameric lipoparticle that plays a role against host immune response. Antagonizing the complement function. Binds to the host macrophages and dendritic cells. Inhibits signal transduction originating from Toll-like receptor 3 (TLR3). Functionally, component of the viral RNA replication complex that functions in virion assembly and antagonizes the host immune response. In terms of biological role, required cofactor for the serine protease function of NS3. May have membrane-destabilizing activity and form viroporins. Its function is as follows. Displays three enzymatic activities: serine protease, NTPase and RNA helicase. NS3 serine protease, in association with NS2B, performs its autocleavage and cleaves the polyprotein at dibasic sites in the cytoplasm: C-prM, NS2A-NS2B, NS2B-NS3, NS3-NS4A, NS4A-2K and NS4B-NS5. NS3 RNA helicase binds RNA and unwinds dsRNA in the 3' to 5' direction. Also plays a role in virus assembly. Regulates the ATPase activity of the NS3 helicase activity. NS4A allows NS3 helicase to conserve energy during unwinding. Functionally, functions as a signal peptide for NS4B and is required for the interferon antagonism activity of the latter. In terms of biological role, induces the formation of ER-derived membrane vesicles where the viral replication takes place. Inhibits interferon (IFN)-induced host STAT1 phosphorylation and nuclear translocation, thereby preventing the establishment of cellular antiviral state by blocking the IFN-alpha/beta pathway. Its function is as follows. Replicates the viral (+) and (-) RNA genome, and performs the capping of genomes in the cytoplasm. NS5 methylates viral RNA cap at guanine N-7 and ribose 2'-O positions. Besides its role in RNA genome replication, also prevents the establishment of cellular antiviral state by blocking the interferon-alpha/beta (IFN-alpha/beta) signaling pathway. IFN-I induces binding of NS5 to host IFN-activated transcription factor STAT2, preventing its transcriptional activity. Host TRIM23 is the E3 ligase that interacts with and polyubiquitinates NS5 to promote its binding to STAT2 and trigger IFN-I signaling inhibition. The sequence is that of Genome polyprotein from Aedes aegypti (Yellowfever mosquito).